A 404-amino-acid chain; its full sequence is MVERVYYKDPYLREIDAKIVDVRKEKDRVEVVLDRTIFYPEGGGQPGDRGVIKGNDFEIMVEDTIEKNGEIFHIGKLRGEIPKEGEKVKLYLDWEWRYGNMQMHTGQHILSAVLKKLYDLDTTGFNIFRDYAKIEVNGEVNWDMIERAELEVNKIIINDLPVVIEEYDKLPEEIALKLRKNVTKVKEKIRIVKIGDVDVTPCGGTHVKSTREVGIIKVLRFYKKSKNLWRIEFTCGYRAISKMNEILRDYWGSLDLMPNKNPPLIERINEVLRTVNSLENRIEELRREIWEWKGKALLKEGVKVGNYTVITHVENWNMKDAQAFAIDFVKKNSNTILLLANEKYVLFAKNEGVPVSMRELLKEVIDELGGKGGGTDNLARGRVEAKPEEIFDVALEKLRSHLQV.

Residues H104, H108, C202, and H206 each coordinate Zn(2+).

The protein belongs to the class-II aminoacyl-tRNA synthetase family. Editing domain AlaX-L subfamily. Zn(2+) is required as a cofactor.

The protein localises to the cytoplasm. Functions in trans to edit the amino acid moiety from mischarged charged tRNA(Ala). The sequence is that of Alanyl-tRNA editing protein AlaX-L (alaXL) from Pyrococcus horikoshii (strain ATCC 700860 / DSM 12428 / JCM 9974 / NBRC 100139 / OT-3).